We begin with the raw amino-acid sequence, 642 residues long: Kinesin-2b (642 aa).

Positions 12-344 (NVMVMVRVRP…LRYADRAKQI (333 aa)) constitute a Kinesin motor domain. 107 to 114 (GQTGSGKT) is a binding site for ATP. ADP-binding residues include Gly110, Gly112, Lys113, and Thr114. Thr114 contacts Mg(2+). A coiled-coil region spans residues 415-475 (VQSLRKNLDK…ERKAKERQLM (61 aa)).

Belongs to the TRAFAC class myosin-kinesin ATPase superfamily. Kinesin family. Kinesin II subfamily.

Its subcellular location is the cell projection. The protein resides in the cilium. It is found in the flagellum. It localises to the cytoplasm. The protein localises to the cytoskeleton. Its subcellular location is the flagellum axoneme. The protein resides in the flagellum basal body. Functionally, involved in anterograde intraflagellar transport (IFT). Involved in flagellar assembly. This is Kinesin-2b from Giardia intestinalis (strain ATCC 50803 / WB clone C6) (Giardia lamblia).